Consider the following 424-residue polypeptide: Serine/threonine-protein kinase H1 (424 aa).

A lipid anchor (N-myristoyl glycine) is attached at G2. C3 carries S-palmitoyl cysteine lipidation. The disordered stretch occupies residues 56–80 (SQYAHPCPGPPTAGHTEPPSEPPRR). The 258-residue stretch at 98–355 (YDIKALIGRG…ALQALRHPWV (258 aa)) folds into the Protein kinase domain. ATP contacts are provided by residues 104–112 (IGRGSFSRV) and K127. Residue D218 is the Proton acceptor of the active site. The disordered stretch occupies residues 378 to 407 (RASSRCQSTKSAQSTRSSRSTRSNKSRRVR). 2 positions are modified to phosphoserine; by autocatalysis: S380 and S381. The span at 385 to 398 (STKSAQSTRSSRST) shows a compositional bias: low complexity.

This sequence belongs to the protein kinase superfamily. CAMK Ser/Thr protein kinase family. As to quaternary structure, homodimer. Post-translationally, autophosphorylated on serine residues. In terms of processing, myristoylated. Required for membrane association. Prerequisite for palmitoylation to occur. Palmitoylated. Expressed in all tissues and cell lines tested with the highest level of abundance in testis.

It localises to the golgi apparatus. It is found in the cytoplasm. Its subcellular location is the cytoskeleton. The protein resides in the microtubule organizing center. The protein localises to the centrosome. It localises to the nucleus speckle. It is found in the endoplasmic reticulum membrane. Its subcellular location is the cell membrane. The catalysed reaction is L-seryl-[protein] + ATP = O-phospho-L-seryl-[protein] + ADP + H(+). The enzyme catalyses L-threonyl-[protein] + ATP = O-phospho-L-threonyl-[protein] + ADP + H(+). Activity depends on Ca(2+) concentration. Its function is as follows. Serine/threonine protein kinase that may be involved in the regulation of pre-mRNA processing. It may phosphorylate components of nuclear splice factor compartments (SFC), such as non-snRNP splicing factors containing a serine/arginine-rich domain (SR proteins). Reversible phosphorylation of SR proteins may cause their release into the nucleoplasm and change their local concentration, thereby influencing alternative splicing. The chain is Serine/threonine-protein kinase H1 (PSKH1) from Homo sapiens (Human).